Reading from the N-terminus, the 866-residue chain is Leucine--tRNA ligase (866 aa).

A 'HIGH' region motif is present at residues 42-52 (PYPSGKLHMGH). Positions 624–628 (TMSKS) match the 'KMSKS' region motif. Lys-627 provides a ligand contact to ATP.

The protein belongs to the class-I aminoacyl-tRNA synthetase family.

It localises to the cytoplasm. It carries out the reaction tRNA(Leu) + L-leucine + ATP = L-leucyl-tRNA(Leu) + AMP + diphosphate. This is Leucine--tRNA ligase from Nitrosospira multiformis (strain ATCC 25196 / NCIMB 11849 / C 71).